The chain runs to 196 residues: Imidazoleglycerol-phosphate dehydratase (196 aa).

This sequence belongs to the imidazoleglycerol-phosphate dehydratase family.

It is found in the cytoplasm. The catalysed reaction is D-erythro-1-(imidazol-4-yl)glycerol 3-phosphate = 3-(imidazol-4-yl)-2-oxopropyl phosphate + H2O. It participates in amino-acid biosynthesis; L-histidine biosynthesis; L-histidine from 5-phospho-alpha-D-ribose 1-diphosphate: step 6/9. This is Imidazoleglycerol-phosphate dehydratase from Akkermansia muciniphila (strain ATCC BAA-835 / DSM 22959 / JCM 33894 / BCRC 81048 / CCUG 64013 / CIP 107961 / Muc).